We begin with the raw amino-acid sequence, 183 residues long: Large ribosomal subunit protein bL17 (183 aa).

A compositionally biased stretch (basic and acidic residues) spans 130-150 (GTKFAKDEKAKAEATEAKAEE). Residues 130–183 (GTKFAKDEKAKAEATEAKAEETTETTESTEAESTEAPAEEAKAEDTAAEKKDES) are disordered. The segment covering 151–162 (TTETTESTEAES) has biased composition (acidic residues). Residues 168–183 (EEAKAEDTAAEKKDES) show a composition bias toward basic and acidic residues.

Belongs to the bacterial ribosomal protein bL17 family. As to quaternary structure, part of the 50S ribosomal subunit. Contacts protein L32.

This is Large ribosomal subunit protein bL17 from Saccharopolyspora erythraea (strain ATCC 11635 / DSM 40517 / JCM 4748 / NBRC 13426 / NCIMB 8594 / NRRL 2338).